Here is a 176-residue protein sequence, read N- to C-terminus: NAD(P)H-quinone oxidoreductase subunit 6, chloroplastic (176 aa).

The next 5 helical transmembrane spans lie at 10–30 (FLLV…VLLP), 33–53 (IYSA…YILL), 61–81 (AQLL…VMFM), 92–112 (LWTI…ISLI), and 152–172 (FFLP…GAIA).

The protein belongs to the complex I subunit 6 family. NDH is composed of at least 16 different subunits, 5 of which are encoded in the nucleus.

Its subcellular location is the plastid. It localises to the chloroplast thylakoid membrane. The catalysed reaction is a plastoquinone + NADH + (n+1) H(+)(in) = a plastoquinol + NAD(+) + n H(+)(out). The enzyme catalyses a plastoquinone + NADPH + (n+1) H(+)(in) = a plastoquinol + NADP(+) + n H(+)(out). In terms of biological role, NDH shuttles electrons from NAD(P)H:plastoquinone, via FMN and iron-sulfur (Fe-S) centers, to quinones in the photosynthetic chain and possibly in a chloroplast respiratory chain. The immediate electron acceptor for the enzyme in this species is believed to be plastoquinone. Couples the redox reaction to proton translocation, and thus conserves the redox energy in a proton gradient. This Coffea arabica (Arabian coffee) protein is NAD(P)H-quinone oxidoreductase subunit 6, chloroplastic (ndhG).